The sequence spans 132 residues: Urease subunit beta (132 aa).

This sequence belongs to the urease beta subunit family. In terms of assembly, heterotrimer of UreA (gamma), UreB (beta) and UreC (alpha) subunits. Three heterotrimers associate to form the active enzyme.

It localises to the cytoplasm. The enzyme catalyses urea + 2 H2O + H(+) = hydrogencarbonate + 2 NH4(+). The protein operates within nitrogen metabolism; urea degradation; CO(2) and NH(3) from urea (urease route): step 1/1. The protein is Urease subunit beta of Natronomonas pharaonis (strain ATCC 35678 / DSM 2160 / CIP 103997 / JCM 8858 / NBRC 14720 / NCIMB 2260 / Gabara) (Halobacterium pharaonis).